A 377-amino-acid chain; its full sequence is Presenilin-associated rhomboid-like protein, mitochondrial (377 aa).

A mitochondrion-targeting transit peptide spans 1-50 (MALYSWVQRGWRCGQTWAPLLGGGYRELSATQARQLLGRRFNLLLQQKCG). Over 51–95 (FRKAPRKVEPRRSDTGSSGEAYKRSALIPPLEETVFYPSPYPVRT) the chain is Mitochondrial matrix. A phosphoserine mark is found at S63 and S68. A helical transmembrane segment spans residues 96-116 (LLKPFFFTVGFTGCAFGSAAI). Topologically, residues 117–165 (WQYESLKSRVQSYFDGIKADWLDSIRPQKEGNLRKEINKWWNSLSDGQR) are mitochondrial intermembrane. A helical transmembrane segment spans residues 166–186 (TVTGIIAANALVFCLWRVPSL). Residues 187–214 (HRTMIRYFTSNPASKVLCSPMLLSTFSH) are Mitochondrial matrix-facing. The chain crosses the membrane as a helical span at residues 215–235 (FSLFHMAANMYVLWSFSTSIV). At 236-242 (NILGQEQ) the chain is on the mitochondrial intermembrane side. A helical transmembrane segment spans residues 243 to 263 (FVAVYLSAGVISNFVSYVCKV). Topologically, residues 264–268 (ATGRY) are mitochondrial matrix. A helical membrane pass occupies residues 269–289 (GPSLGASGAIMTVLAAVCTKI). Residue S275 is the Nucleophile of the active site. Residues 290-293 (PEGR) are Mitochondrial intermembrane-facing. Residues 294–314 (LAIIFLPVFTFTAGNALKAII) form a helical membrane-spanning segment. The Mitochondrial matrix portion of the chain corresponds to 315–331 (AMDTAGMILGWKFFDHA). Residues 332–352 (AHLGGALFGIWYITYGHELIW) form a helical membrane-spanning segment. H333 is a catalytic residue. At 353 to 377 (KNREPLVKIWHEIRTNGPKKGGGSK) the chain is on the mitochondrial intermembrane side.

It belongs to the peptidase S54 family. Interacts with PSEN1 and PSEN2. Binds OPA1. P-beta is proteolytically processed (beta-cleavage) in a PARL-dependent manner.

Its subcellular location is the mitochondrion inner membrane. The protein localises to the nucleus. The catalysed reaction is Cleaves type-1 transmembrane domains using a catalytic dyad composed of serine and histidine that are contributed by different transmembrane domains.. In terms of biological role, required for the control of apoptosis during postnatal growth. Essential for proteolytic processing of an antiapoptotic form of OPA1 which prevents the release of mitochondrial cytochrome c in response to intrinsic apoptotic signals. Required for the maturation of PINK1 into its 52kDa mature form after its cleavage by mitochondrial-processing peptidase (MPP). Promotes cleavage of serine/threonine-protein phosphatase PGAM5 in damaged mitochondria in response to loss of mitochondrial membrane potential. Mediates differential cleavage of PINK1 and PGAM5 depending on the health status of mitochondria, disassociating from PINK1 and associating with PGAM5 in response to mitochondrial membrane potential loss. Required for processing of CLPB into a form with higher protein disaggregase activity by removing an autoinhibitory N-terminal peptide. Promotes processing of DIABLO/SMAC in the mitochondrion which is required for DIABLO apoptotic activity. Also required for cleavage of STARD7 and TTC19. Promotes changes in mitochondria morphology regulated by phosphorylation of P-beta domain. In Rattus norvegicus (Rat), this protein is Presenilin-associated rhomboid-like protein, mitochondrial.